The sequence spans 167 residues: Ion-translocating oxidoreductase complex subunit B (167 aa).

The hydrophobic stretch occupies residues 1–22 (MITLIIFSFLSFLLGIILSFTA). The 60-residue stretch at 28-87 (QEDPIVAIVNELLPQSQCAQCGYSGCYPYAKAIVENSEKINKCIPGGTDLISAISSVLSI) folds into the 4Fe-4S domain. [4Fe-4S] cluster-binding residues include Cys-45, Cys-48, Cys-53, Cys-70, Cys-113, Cys-116, Cys-119, Cys-123, Cys-143, Cys-146, Cys-149, and Cys-153. 2 4Fe-4S ferredoxin-type domains span residues 104 to 133 (NTVL…GAPN) and 134 to 163 (FIHT…IKKE).

Belongs to the 4Fe4S bacterial-type ferredoxin family. RnfB subfamily. As to quaternary structure, the complex is composed of six subunits: RnfA, RnfB, RnfC, RnfD, RnfE and RnfG. The cofactor is [4Fe-4S] cluster.

It is found in the cell inner membrane. Functionally, part of a membrane-bound complex that couples electron transfer with translocation of ions across the membrane. The sequence is that of Ion-translocating oxidoreductase complex subunit B from Buchnera aphidicola subsp. Acyrthosiphon pisum (strain 5A).